Reading from the N-terminus, the 377-residue chain is UDP-N-acetylenolpyruvoylglucosamine reductase (377 aa).

An FAD-binding PCMH-type domain is found at 48–215 (LGGTPMAAVR…LGITLQLHTD (168 aa)). The active site involves Arg193. The active-site Proton donor is the Ser268. The active site involves Glu369.

This sequence belongs to the MurB family. Requires FAD as cofactor.

The protein localises to the cytoplasm. It carries out the reaction UDP-N-acetyl-alpha-D-muramate + NADP(+) = UDP-N-acetyl-3-O-(1-carboxyvinyl)-alpha-D-glucosamine + NADPH + H(+). It functions in the pathway cell wall biogenesis; peptidoglycan biosynthesis. Cell wall formation. This Corynebacterium diphtheriae (strain ATCC 700971 / NCTC 13129 / Biotype gravis) protein is UDP-N-acetylenolpyruvoylglucosamine reductase.